Here is a 503-residue protein sequence, read N- to C-terminus: Cytochrome P450 monooxygenase ecdH (503 aa).

A helical membrane pass occupies residues 8–24; it reads TTLLCGVISSTLLLLLL. 3 N-linked (GlcNAc...) asparagine glycosylation sites follow: asparagine 64, asparagine 324, and asparagine 413. Cysteine 449 serves as a coordination point for heme.

It belongs to the cytochrome P450 family. Heme serves as cofactor.

The protein localises to the membrane. It participates in antifungal biosynthesis. In terms of biological role, cytochrome P450 monooxygenase; part of the gene cluster that mediates the biosynthesis of echinocandin B, a fungal lipidated cyclic hexapeptide that acts as an antifungal agent. Linoleoyl-AMP, produced by the fatty-acyl-AMP ligase ecdI, is transferred to the initiation carrier domain (T0) of ecdA. The linoleoyl-S-phosphopantetheinyl-T0 is sequentially extended with L-ornithine, L-threonine, L-proline, L-homotyrosine, L-threonine, and 4R-methyl-L-proline to form the linear hexapeptide. Thereafter, the terminal condensation (C7) performs macrocyclization of the NRPS product and the cyclic scaffold is released from ecdA. All six of the amino acid residues are hydroxylated, including 4R,5R-dihydroxy-L-ornithine, 4R-hydroxyl-L-proline, 3S,4S-dihydroxy-L-homotyrosine, and 3S-hydroxyl-4S-methyl-L-prolin. In the pathway, all the hydroxylation reactions are proposed to occur following completion of the cyclic peptide, so the unhydroxylated precursor produced by ecdA will undergo six rounds of hydroxylation. Five hydroxylase genes (ecdG, ecdH, ecdK, htyE and htyF) are embedded within the echinocandin B (ecd) and L-homotyrosine (hty) clusters. This Aspergillus rugulosus (Emericella rugulosa) protein is Cytochrome P450 monooxygenase ecdH.